The primary structure comprises 232 residues: 2-C-methyl-D-erythritol 4-phosphate cytidylyltransferase (232 aa).

This sequence belongs to the IspD/TarI cytidylyltransferase family. IspD subfamily.

It carries out the reaction 2-C-methyl-D-erythritol 4-phosphate + CTP + H(+) = 4-CDP-2-C-methyl-D-erythritol + diphosphate. Its pathway is isoprenoid biosynthesis; isopentenyl diphosphate biosynthesis via DXP pathway; isopentenyl diphosphate from 1-deoxy-D-xylulose 5-phosphate: step 2/6. Its function is as follows. Catalyzes the formation of 4-diphosphocytidyl-2-C-methyl-D-erythritol from CTP and 2-C-methyl-D-erythritol 4-phosphate (MEP). The chain is 2-C-methyl-D-erythritol 4-phosphate cytidylyltransferase from Vibrio cholerae serotype O1 (strain ATCC 39315 / El Tor Inaba N16961).